We begin with the raw amino-acid sequence, 260 residues long: Phosphate import ATP-binding protein PstB (260 aa).

In terms of domain architecture, ABC transporter spans 14 to 255 (IETENLSLFY…PKNTKTEEYI (242 aa)). Residue 46–53 (GPSGCGKS) participates in ATP binding.

It belongs to the ABC transporter superfamily. Phosphate importer (TC 3.A.1.7) family. In terms of assembly, the complex is composed of two ATP-binding proteins (PstB), two transmembrane proteins (PstC and PstA) and a solute-binding protein (PstS).

The protein resides in the cell inner membrane. It carries out the reaction phosphate(out) + ATP + H2O = ADP + 2 phosphate(in) + H(+). In terms of biological role, part of the ABC transporter complex PstSACB involved in phosphate import. Responsible for energy coupling to the transport system. The polypeptide is Phosphate import ATP-binding protein PstB (Borrelia garinii subsp. bavariensis (strain ATCC BAA-2496 / DSM 23469 / PBi) (Borreliella bavariensis)).